The chain runs to 95 residues: Small integral membrane protein 26 (95 aa).

A helical membrane pass occupies residues 13 to 35; that stretch reads MSVVYGIGTWSVLGSLLYYSRTM.

It belongs to the SMIM26 family. As to quaternary structure, interacts with AGK and SLC25A11. As to expression, detected in kidney (at protein level).

It is found in the mitochondrion outer membrane. In terms of biological role, may play a role in cell viability. The protein is Small integral membrane protein 26 of Homo sapiens (Human).